A 146-amino-acid chain; its full sequence is Ribonuclease H (146 aa).

An RNase H type-1 domain is found at 1 to 141; sequence MKKVQLITDG…CDELATRAAR (141 aa). Mg(2+) contacts are provided by Asp-9, Glu-47, Asp-69, and Asp-133.

This sequence belongs to the RNase H family. Monomer. The cofactor is Mg(2+).

It localises to the cytoplasm. The enzyme catalyses Endonucleolytic cleavage to 5'-phosphomonoester.. In terms of biological role, endonuclease that specifically degrades the RNA of RNA-DNA hybrids. This Solibacter usitatus (strain Ellin6076) protein is Ribonuclease H.